The chain runs to 71 residues: Translation initiation factor IF-1 (71 aa).

An S1-like domain is found at 1–71; sequence MSKDDLIQFT…LTKGRVIHRH (71 aa).

It belongs to the IF-1 family. In terms of assembly, component of the 30S ribosomal translation pre-initiation complex which assembles on the 30S ribosome in the order IF-2 and IF-3, IF-1 and N-formylmethionyl-tRNA(fMet); mRNA recruitment can occur at any time during PIC assembly.

Its subcellular location is the cytoplasm. One of the essential components for the initiation of protein synthesis. Stabilizes the binding of IF-2 and IF-3 on the 30S subunit to which N-formylmethionyl-tRNA(fMet) subsequently binds. Helps modulate mRNA selection, yielding the 30S pre-initiation complex (PIC). Upon addition of the 50S ribosomal subunit IF-1, IF-2 and IF-3 are released leaving the mature 70S translation initiation complex. In Rickettsia felis (strain ATCC VR-1525 / URRWXCal2) (Rickettsia azadi), this protein is Translation initiation factor IF-1.